A 643-amino-acid chain; its full sequence is Phosphatidylinositol-3,5-bisphosphate 3-phosphatase MTMR2 (643 aa).

Composition is skewed to polar residues over residues 1–12 and 23–40; these read MEKSSSCESLGS and DSLS…VHTK. The tract at residues 1-54 is disordered; the sequence is MEKSSSCESLGSQPAVARPPSVDSLSSASTSHSENSVHTKSASVVSSDSISTSA. Serine 6 and serine 9 each carry phosphoserine. Residues 41-54 are compositionally biased toward low complexity; it reads SASVVSSDSISTSA. At serine 58 the chain carries Phosphoserine. The GRAM domain occupies 68-139; it reads NKLAEMEEPP…GVISRVEKIG (72 aa). A Myotubularin phosphatase domain is found at 205 to 580; that stretch reads GWKLYDSLSE…RHLELWVGYY (376 aa). The a 1,2-diacyl-sn-glycero-3-phospho-(1D-myo-inositol-3,5-bisphosphate) site is built by asparagine 330, asparagine 355, and isoleucine 356. The a 1,2-diacyl-sn-glycero-3-phospho-(1D-myo-inositol-3-phosphate) site is built by asparagine 330, asparagine 355, and isoleucine 356. The Phosphocysteine intermediate role is filled by cysteine 417. A 1,2-diacyl-sn-glycero-3-phospho-(1D-myo-inositol-3,5-bisphosphate)-binding residues include serine 418, aspartate 419, glycine 420, tryptophan 421, aspartate 422, arginine 423, arginine 459, and arginine 463. 6 residues coordinate a 1,2-diacyl-sn-glycero-3-phospho-(1D-myo-inositol-3-phosphate): serine 418, aspartate 419, glycine 420, tryptophan 421, aspartate 422, and arginine 423. Arginine 463 lines the a 1,2-diacyl-sn-glycero-3-phospho-(1D-myo-inositol-3-phosphate) pocket. Residues 593–627 adopt a coiled-coil conformation; it reads IHNRYKELLAKRAELQKKVEELQREISNRSTSSSE. The disordered stretch occupies residues 614–643; that stretch reads LQREISNRSTSSSERAGSPAQCVTPVQTVV.

This sequence belongs to the protein-tyrosine phosphatase family. Non-receptor class myotubularin subfamily. In terms of assembly, homodimer (via coiled-coil domain). Heterotetramer consisting of one MTMR2 dimer and one SBF2/MTMR13 dimer; specifically in peripheral nerves stabilizes SBF2/MTMR13 at the membranes and increases MTMR2 catalytic activity towards phosphatidylinositol 3,5-bisphosphate and to a lesser extent towards phosphatidylinositol 3-phosphate. Heterodimer with SBF1/MTMR5; acts as an adapter for the phosphatase MTMR2 to regulate MTMR2 catalytic activity and subcellular location. Heterodimer with MTMR12. In terms of processing, phosphorylation at Ser-58 decreases MTMR2 localization to endocytic vesicular structures.

The protein resides in the cytoplasm. The protein localises to the early endosome membrane. It is found in the perinuclear region. Its subcellular location is the cell projection. It localises to the axon. The protein resides in the endosome membrane. The catalysed reaction is a 1,2-diacyl-sn-glycero-3-phospho-(1D-myo-inositol-3,5-bisphosphate) + H2O = a 1,2-diacyl-sn-glycero-3-phospho-(1D-myo-inositol-5-phosphate) + phosphate. The enzyme catalyses a 1,2-diacyl-sn-glycero-3-phospho-(1D-myo-inositol-3-phosphate) + H2O = a 1,2-diacyl-sn-glycero-3-phospho-(1D-myo-inositol) + phosphate. It carries out the reaction 1,2-dioctanoyl-sn-glycero-3-phospho-(1-D-myo-inositol-3-phosphate) + H2O = 1,2-dioctanoyl-sn-glycero-3-phospho-(1D-myo-inositol) + phosphate. It catalyses the reaction 1,2-dioctanoyl-sn-glycero-3-phospho-(1D-myo-inositol-3,5-bisphosphate) + H2O = 1,2-dioctanoyl-sn-glycero-3-phospho-(1D-myo-inositol-5-phosphate) + phosphate. In terms of biological role, lipid phosphatase that specifically dephosphorylates the D-3 position of phosphatidylinositol 3-phosphate and phosphatidylinositol 3,5-bisphosphate, generating phosphatidylinositol and phosphatidylinositol 5-phosphate. Regulates the level of these phosphoinositides critical for various biological processes including autophagy initiation and autophagosome maturation. This Bos taurus (Bovine) protein is Phosphatidylinositol-3,5-bisphosphate 3-phosphatase MTMR2.